Here is a 1846-residue protein sequence, read N- to C-terminus: Brefeldin A-inhibited guanine nucleotide-exchange protein 1 (1846 aa).

Positions 2–224 are DCB; DCB:DCB domain and DCB:HUS domain interaction; sequence YEGKKTKNMF…QEAKQMERER (223 aa). The residue at position 52 (serine 52) is a Phosphoserine. Disordered stretches follow at residues 217–248, 264–302, and 347–410; these read AKQM…HLRY, DLDP…DQAT, and VSAS…SPGA. Over residues 267 to 277 the composition is skewed to basic and acidic residues; it reads PQTHDVDKSLQ. Serine 286, serine 289, serine 290, serine 394, and serine 407 each carry phosphoserine. Over residues 391–406 the composition is skewed to polar residues; the sequence is SVSSNDTQESGNSSGP. The segment at 554-574 is HUS; DCB:HUS domain interaction; sequence ADAQSVVDIYVNYDCDLNAAN. Residues 631 to 684 form a disordered region; sequence PNSQTTLGQEKPSEQEISEIKHPETINRYGSLNSLESTSSSGIGSYSTQMSGTD. A compositionally biased stretch (basic and acidic residues) spans 641–655; it reads KPSEQEISEIKHPET. The span at 661 to 681 shows a compositional bias: low complexity; that stretch reads SLNSLESTSSSGIGSYSTQMS. Positions 688–877 constitute an SEC7 domain; the sequence is QFEVLKQQKE…SAIYNEIAGK (190 aa). A Nuclear localization signal (NLS) motif is present at residues 708 to 712; the sequence is KKPKR. A phosphoserine mark is found at serine 1076, serine 1563, and serine 1566. The interval 1571-1600 is disordered; the sequence is DSAQPRSSDNRQQAPLVSVSPASEEVSKGR. Polar residues predominate over residues 1574–1585; it reads QPRSSDNRQQAP.

Homodimer. Interacts with ARFGEF2/BIG2; both proteins are probably part of the same or very similar macromolecular complexes. Interacts with FKBP2. Interacts with MYO9B. Interacts with PRKAR1A and PRKAR2A. Interacts with PPP1CC. Interacts with NCL, FBL, NUP62 and U3 small nucleolar RNA. Interacts with DPY30. Interacts with PDE3A. Interacts with KANK1. Interacts with TBC1D22A and TBC1D22B. In terms of processing, phosphorylated. In vitro phosphorylated by PKA reducing its GEF activity and dephosphorylated by phosphatase PP1.

The protein localises to the cytoplasm. It is found in the perinuclear region. It localises to the golgi apparatus. The protein resides in the trans-Golgi network. Its subcellular location is the nucleus. The protein localises to the nucleolus. It is found in the nucleus matrix. It localises to the membrane. Inhibited by brefeldin A. In terms of biological role, promotes guanine-nucleotide exchange on ARF1 and ARF3. Promotes the activation of ARF1/ARF3 through replacement of GDP with GTP. Involved in vesicular trafficking. Required for the maintenance of Golgi structure; the function may be independent of its GEF activity. Required for the maturation of integrin beta-1 in the Golgi. Involved in the establishment and persistence of cell polarity during directed cell movement in wound healing. Proposed to act as A kinase-anchoring protein (AKAP) and may mediate crosstalk between Arf and PKA pathways. Inhibits GAP activity of MYO9B probably through competitive RhoA binding. The function in the nucleus remains to be determined. The chain is Brefeldin A-inhibited guanine nucleotide-exchange protein 1 (Arfgef1) from Rattus norvegicus (Rat).